The following is a 987-amino-acid chain: Ephrin type-B receptor 2 (987 aa).

A signal peptide spans 1–19 (MGPLWFCCLPLALLPLLAA). The Extracellular segment spans residues 20–544 (VEETLMDSTT…QTSVQEKLPL (525 aa)). Positions 21-203 (EETLMDSTTA…FYRKCPRVIQ (183 aa)) constitute an Eph LBD domain. 2 disulfide bridges follow: C63/C185 and C98/C108. N-linked (GlcNAc...) asparagine glycosylation is found at N266, N337, N429, N478, and N483. Fibronectin type-III domains lie at 325-435 (IPSA…TNQA) and 436-531 (APSA…TMTE). The chain crosses the membrane as a helical span at residues 545–565 (IIGSSAAGLVFLIAVVVIIIV). The Cytoplasmic portion of the chain corresponds to 566 to 987 (CNRRGFERAD…QMNQIQSVEV (422 aa)). A Protein kinase domain is found at 622 to 885 (VKIEQVIGAG…QIVNTLDKMI (264 aa)). ATP contacts are provided by residues 628-636 (IGAGEFGEV) and K654. The Proton acceptor role is filled by D747. K892 participates in a covalent cross-link: Glycyl lysine isopeptide (Lys-Gly) (interchain with G-Cter in ubiquitin). The SAM domain maps to 914 to 978 (TSFNTVDEWL…LNSIQVMRAQ (65 aa)). The short motif at 985 to 987 (VEV) is the PDZ-binding element.

The protein belongs to the protein kinase superfamily. Tyr protein kinase family. Ephrin receptor subfamily. Heterotetramer upon binding of the ligand. The heterotetramer is composed of an ephrin dimer and a receptor dimer. Oligomerization is probably required to induce biological responses. Ligand binding induces cleavage by matrix metalloproteinases (MMPs) such as MMP7/MMP9, producing an EphB2/N-terminal fragment (NTF) and a C-terminal long fragment (EphB2-LF). EphB2-LF is further cleaved by MMPs, producing EphB2/CTF1 which is further cleaved by the PS1/gamma-secretase producing EphB2/CTF2. In terms of processing, polyubiquitinated; ligand binding stimulates ubiquitination. Ubiquitinated by RNF186 at Lys-892, mainly through 'Lys-27'-linked polyubiquitin chains.

It is found in the cell membrane. The protein resides in the cell projection. Its subcellular location is the axon. The protein localises to the dendrite. The catalysed reaction is L-tyrosyl-[protein] + ATP = O-phospho-L-tyrosyl-[protein] + ADP + H(+). In terms of biological role, receptor tyrosine kinase which binds promiscuously transmembrane ephrin-B family ligands residing on adjacent cells, leading to contact-dependent bidirectional signaling into neighboring cells. The signaling pathway downstream of the receptor is referred to as forward signaling while the signaling pathway downstream of the ephrin ligand is referred to as reverse signaling. Functions in axon guidance during development. In addition to axon guidance, also regulates dendritic spines development and maturation and stimulates the formation of excitatory synapses. This Coturnix japonica (Japanese quail) protein is Ephrin type-B receptor 2 (EPHB2).